A 463-amino-acid polypeptide reads, in one-letter code: Dialkyldecalin synthase (463 aa).

FAD is bound by residues Val13, 32–33, Ile121, and Asp275; that span reads ER.

Belongs to the PheA/TfdB FAD monooxygenase family. As to quaternary structure, homodimer. FAD serves as cofactor.

The catalysed reaction is 4-[(2E,7S,8E,10E,13R,14R,16E,18E)-14-ethyl-7,13-dihydroxy-2,16,18-trimethylicosa-2,8,10,16,18-pentaenoyl]-2-methylidene-5-oxo-2,5-dihydro-1H-pyrrol-3-olate = 4-[(1R,2R,4aS,5S,8aR)-2-[(2R,3R,5E,7E)-3-ethyl-2-hydroxy-5,7-dimethylnona-5,7-dien-1-yl]-5-hydroxy-1-methyl-1,2,4a,5,6,7,8,8a-octahydronaphthalene-1-carbonyl]-2-methylidene-5-oxo-2,5-dihydro-1H-pyrrol-3-olate. It functions in the pathway antibiotic biosynthesis. Involved in the biosynthesis of the spirotetramate antibiotics pyrroindomycins. Catalyzes the intramolecular cyclization forming the dialkyldecalin moiety in pyrroindomycins, via an endo-selective [4+2] cycloaddition reaction. The sequence is that of Dialkyldecalin synthase from Streptomyces rugosporus.